Consider the following 470-residue polypeptide: Probable citrate synthase, mitochondrial (470 aa).

Catalysis depends on residues H297, H351, and D406.

It belongs to the citrate synthase family. As to quaternary structure, homodimer.

It localises to the mitochondrion matrix. It carries out the reaction oxaloacetate + acetyl-CoA + H2O = citrate + CoA + H(+). Its pathway is carbohydrate metabolism; tricarboxylic acid cycle; isocitrate from oxaloacetate: step 1/2. The sequence is that of Probable citrate synthase, mitochondrial from Leishmania major.